A 1202-amino-acid chain; its full sequence is PAN2-PAN3 deadenylation complex catalytic subunit PAN2 (1202 aa).

WD repeat units follow at residues 153-193 (DENE…QKYA), 195-231 (ETPG…VEHE), 244-280 (VHGN…AITP), and 328-367 (PVGP…SFNP). The interval 368-485 (YSRETEFALP…VGREEEPHLH (118 aa)) is linker. Residues 486–924 (MVSKKYRKVT…VPAILYYVKR (439 aa)) enclose the USP domain. Residue Ser-791 is modified to Phosphoserine. The 173-residue stretch at 975–1147 (VGLDAEFVTL…EDARTALQLY (173 aa)) folds into the Exonuclease domain. The a divalent metal cation site is built by Asp-978, Glu-980, Asp-1087, and Asp-1139. Ser-1189 is subject to Phosphoserine.

The protein belongs to the peptidase C19 family. PAN2 subfamily. In terms of assembly, forms a heterotrimer with an asymmetric homodimer of the regulatory subunit PAN3 to form the poly(A)-nuclease (PAN) deadenylation complex. Interacts with PAN3 isoform 1/Pan3L and isoform 3/Pan3S. Interacts with ZFP36. The cofactor is a divalent metal cation.

The protein resides in the cytoplasm. It localises to the P-body. Its subcellular location is the nucleus. The catalysed reaction is Exonucleolytic cleavage of poly(A) to 5'-AMP.. Its activity is regulated as follows. Positively regulated by the regulatory subunit PAN3. In terms of biological role, catalytic subunit of the poly(A)-nuclease (PAN) deadenylation complex, one of two cytoplasmic mRNA deadenylases involved in general and miRNA-mediated mRNA turnover. PAN specifically shortens poly(A) tails of RNA and the activity is stimulated by poly(A)-binding protein (PABP). PAN deadenylation is followed by rapid degradation of the shortened mRNA tails by the CCR4-NOT complex. Deadenylated mRNAs are then degraded by two alternative mechanisms, namely exosome-mediated 3'-5' exonucleolytic degradation, or deadenylation-dependent mRNA decaping and subsequent 5'-3' exonucleolytic degradation by XRN1. Also acts as an important regulator of the HIF1A-mediated hypoxic response. Required for HIF1A mRNA stability independent of poly(A) tail length regulation. This chain is PAN2-PAN3 deadenylation complex catalytic subunit PAN2, found in Homo sapiens (Human).